Consider the following 113-residue polypeptide: U11-theraphotoxin-Hhn1t (113 aa).

An N-terminal signal peptide occupies residues 1 to 21 (MNTVRVTFLLVFVLAVSLGQA). The propeptide occupies 22-74 (DKDENRMEMQEKTEQGKSYLDFAENLLLQKLEELEAKLLEEDSEESRNSRQKR). Residues 60 to 69 (LEEDSEESRN) show a composition bias toward basic and acidic residues. Positions 60 to 83 (LEEDSEESRNSRQKRCIGEGVPCD) are disordered. Intrachain disulfides connect Cys75–Cys90, Cys82–Cys95, and Cys89–Cys110.

It belongs to the neurotoxin 14 (magi-1) family. 01 (HNTX-16) subfamily. In terms of tissue distribution, expressed by the venom gland.

The protein localises to the secreted. Its function is as follows. Probable ion channel inhibitor. The chain is U11-theraphotoxin-Hhn1t from Cyriopagopus hainanus (Chinese bird spider).